The following is a 123-amino-acid chain: Small ribosomal subunit protein uS13 (123 aa).

The interval Thr-103 to Lys-123 is disordered. The segment covering Thr-105–Lys-123 has biased composition (basic residues).

Belongs to the universal ribosomal protein uS13 family. Part of the 30S ribosomal subunit. Forms a loose heterodimer with protein S19. Forms two bridges to the 50S subunit in the 70S ribosome.

In terms of biological role, located at the top of the head of the 30S subunit, it contacts several helices of the 16S rRNA. In the 70S ribosome it contacts the 23S rRNA (bridge B1a) and protein L5 of the 50S subunit (bridge B1b), connecting the 2 subunits; these bridges are implicated in subunit movement. Contacts the tRNAs in the A and P-sites. The protein is Small ribosomal subunit protein uS13 of Desulforudis audaxviator (strain MP104C).